The following is a 53-amino-acid chain: Mitochondrial sheath formation-associated protein (53 aa).

Mitochondrial intermembrane loops occupy residues 1-6 (MIVLGW) and 1-7 (MIVLGWM). Transmembrane regions (helical) follow at residues 7-23 (MLFVGLATYMGTFPEAM) and 8-24 (LFVGLATYMGTFPEAMP). Cytoplasmic-side segments run 24-53 (PPTLKWKERLPGQENKARRRIQALEEELLL) and 25-40 (PTLKWKERLPGQENKA).

As to quaternary structure, interacts with VDAC3. In terms of tissue distribution, testis specific. Detected only in germ cells at the step of spermiogenesis (at protein level). Expressed during the middle steps of spermatid development. As to expression, testis specific. Detected only in germ cells at the step of spermiogenesis (at protein level). Expressed in the late steps of spermatid development.

The protein localises to the mitochondrion outer membrane. Its function is as follows. Regulates sperm development. May be involved in mitochondrial sheath formation. This is Mitochondrial sheath formation-associated protein from Mus musculus (Mouse).